A 168-amino-acid polypeptide reads, in one-letter code: Co-chaperone protein HscB homolog (168 aa).

One can recognise a J domain in the interval 5 to 77 (DYFSLFGLPS…MLRARYLCES (73 aa)).

Belongs to the HscB family. In terms of assembly, interacts with HscA and stimulates its ATPase activity.

Functionally, co-chaperone involved in the maturation of iron-sulfur cluster-containing proteins. Seems to help targeting proteins to be folded toward HscA. This chain is Co-chaperone protein HscB homolog, found in Bordetella avium (strain 197N).